The following is a 291-amino-acid chain: Oxidative stress-responsive serine-rich protein 1 (291 aa).

Positions 29–139 (ISLSVGEGPS…NAGENSTSLD (111 aa)) are disordered. Residues 65–83 (STRKSSRGAVRTQRRRRSK) are compositionally biased toward basic residues. Residues 95–105 (CSTTAPPSSSQ) are compositionally biased toward polar residues. A Phosphothreonine modification is found at threonine 143.

This chain is Oxidative stress-responsive serine-rich protein 1 (Oser1), found in Mus musculus (Mouse).